Here is a 394-residue protein sequence, read N- to C-terminus: Chaperone protein DnaJ (394 aa).

The 65-residue stretch at 4–68 folds into the J domain; it reads DYYEILGVSR…ELKARYDRFG (65 aa). Residues 136–218 form a CR-type zinc finger; the sequence is GGEKQIRISH…CNGEGLAQTT (83 aa). 8 residues coordinate Zn(2+): cysteine 149, cysteine 152, cysteine 166, cysteine 169, cysteine 192, cysteine 195, cysteine 206, and cysteine 209. 4 CXXCXGXG motif repeats span residues 149–156, 166–173, 192–199, and 206–213; these read CNVCGGSG, CPTCGGSG, and CYNCNGEG.

The protein belongs to the DnaJ family. As to quaternary structure, homodimer. The cofactor is Zn(2+).

It is found in the cytoplasm. In terms of biological role, participates actively in the response to hyperosmotic and heat shock by preventing the aggregation of stress-denatured proteins and by disaggregating proteins, also in an autonomous, DnaK-independent fashion. Unfolded proteins bind initially to DnaJ; upon interaction with the DnaJ-bound protein, DnaK hydrolyzes its bound ATP, resulting in the formation of a stable complex. GrpE releases ADP from DnaK; ATP binding to DnaK triggers the release of the substrate protein, thus completing the reaction cycle. Several rounds of ATP-dependent interactions between DnaJ, DnaK and GrpE are required for fully efficient folding. Also involved, together with DnaK and GrpE, in the DNA replication of plasmids through activation of initiation proteins. The protein is Chaperone protein DnaJ of Synechococcus sp. (strain JA-2-3B'a(2-13)) (Cyanobacteria bacterium Yellowstone B-Prime).